The primary structure comprises 448 residues: Chromosomal replication initiator protein DnaA (448 aa).

The tract at residues M1–K73 is domain I, interacts with DnaA modulators. The domain II stretch occupies residues K73 to S109. Residues I110–S326 form a domain III, AAA+ region region. ATP-binding residues include G154, G156, K157, and T158. The domain IV, binds dsDNA stretch occupies residues S327–N448.

This sequence belongs to the DnaA family. Oligomerizes as a right-handed, spiral filament on DNA at oriC.

It is found in the cytoplasm. Its function is as follows. Plays an essential role in the initiation and regulation of chromosomal replication. ATP-DnaA binds to the origin of replication (oriC) to initiate formation of the DNA replication initiation complex once per cell cycle. Binds the DnaA box (a 9 base pair repeat at the origin) and separates the double-stranded (ds)DNA. Forms a right-handed helical filament on oriC DNA; dsDNA binds to the exterior of the filament while single-stranded (ss)DNA is stabiized in the filament's interior. The ATP-DnaA-oriC complex binds and stabilizes one strand of the AT-rich DNA unwinding element (DUE), permitting loading of DNA polymerase. After initiation quickly degrades to an ADP-DnaA complex that is not apt for DNA replication. Binds acidic phospholipids. This Clostridium novyi (strain NT) protein is Chromosomal replication initiator protein DnaA.